Here is a 174-residue protein sequence, read N- to C-terminus: MGEGLLDLRSQLGFYKFYHHNPKNVLIHSIFVPTILFSGSCMLHRVKIYQSISLTAVLSVLFSIFYCLLYLPTGLLAGVLLLLLNLALIDHRVDLTFKQELGLFTIGWIFQFVGHGVFEKRRPALIDNLVQSLVLAPYFIMFEFLFKLGFMPRLKATLEHDLEIKQRNLRMQRQ.

Residues 1–23 (MGEGLLDLRSQLGFYKFYHHNPK) are Cytoplasmic-facing. A helical transmembrane segment spans residues 24 to 44 (NVLIHSIFVPTILFSGSCMLH). At 45–63 (RVKIYQSISLTAVLSVLFS) the chain is on the lumenal side. Residues 64 to 84 (IFYCLLYLPTGLLAGVLLLLL) traverse the membrane as a helical segment. The Cytoplasmic portion of the chain corresponds to 85-98 (NLALIDHRVDLTFK). The chain crosses the membrane as a helical span at residues 99-119 (QELGLFTIGWIFQFVGHGVFE). The Lumenal segment spans residues 120 to 131 (KRRPALIDNLVQ). Residues 132–152 (SLVLAPYFIMFEFLFKLGFMP) traverse the membrane as a helical segment. Topologically, residues 153–174 (RLKATLEHDLEIKQRNLRMQRQ) are cytoplasmic.

This sequence belongs to the MPO1 family. The cofactor is Fe(2+).

Its subcellular location is the endoplasmic reticulum membrane. It carries out the reaction (R)-2-hydroxyhexadecanoate + O2 = pentadecanoate + CO2 + H2O. Its function is as follows. Dioxygenase that catalyzes the alpha-oxidation of 2-hydroxy fatty acids in an iron-dependent manner. Involved in metabolism of phytosphingosine and is required for proper endoplasmic reticulum stress response. This Saccharomyces cerevisiae (strain ATCC 204508 / S288c) (Baker's yeast) protein is 2-hydroxy-palmitic acid dioxygenase MPO1.